Reading from the N-terminus, the 338-residue chain is Glycerol-3-phosphate dehydrogenase [NAD(P)+] (338 aa).

The NADPH site is built by serine 11, tryptophan 12, histidine 32, arginine 33, and lysine 106. The sn-glycerol 3-phosphate site is built by lysine 106, glycine 137, and serine 139. Alanine 141 lines the NADPH pocket. Lysine 192, aspartate 245, serine 255, arginine 256, and asparagine 257 together coordinate sn-glycerol 3-phosphate. The active-site Proton acceptor is lysine 192. Arginine 256 lines the NADPH pocket. The NADPH site is built by valine 280 and glutamate 282.

Belongs to the NAD-dependent glycerol-3-phosphate dehydrogenase family.

It is found in the cytoplasm. The catalysed reaction is sn-glycerol 3-phosphate + NAD(+) = dihydroxyacetone phosphate + NADH + H(+). The enzyme catalyses sn-glycerol 3-phosphate + NADP(+) = dihydroxyacetone phosphate + NADPH + H(+). It functions in the pathway membrane lipid metabolism; glycerophospholipid metabolism. In terms of biological role, catalyzes the reduction of the glycolytic intermediate dihydroxyacetone phosphate (DHAP) to sn-glycerol 3-phosphate (G3P), the key precursor for phospholipid synthesis. This Lysinibacillus sphaericus (strain C3-41) protein is Glycerol-3-phosphate dehydrogenase [NAD(P)+].